A 715-amino-acid chain; its full sequence is MPKPRGRRVQSAFKERVENSEATHENSIAETGSDVEISLHEDQPQTSDNKNQGEFSSVFYGLVDSAEIDYFKQAESTLNANVFESDEDRAGFIRSVLEESRGKELKLVTNQICSKLMERLVLLASDRQLKHIFHQFLGHFPALAHHKYSSHVLETLLVRSAALIEKEIVNEYQQDEEDQDENADNDEDNFVASTTMESMFLQMLDQLEPYWSSMIQHQYASHVMRIIILIVSGKELPSSTMANSVLRSKKSKVARKMIEIKDNEDFNRAYQVPSSFKDRLRTIISAVSSPLDTKSARSLAIHKVASPVLQLIIRVEGIVDKERSVWHLIFLSEKAPKDSSEEAFVEYLLSDSVGSHFLEAIIKNDGARMKYIERLYRLYMKDRVLKLARRATTGVYIIQALLLKLKPGEVEHILDEIIPELSSLISISESQNIDLGKAIIDASISRFNYRRDELIEQLFQKFAPNYNVSDPSEDTTTELFENVLQLASSTLGNTRDDWPTAEERRRSLFLEKLMQYDYSFVVCVWLNCMALPQERLMQMCFHGVFSHVIEHALVVKPASEGEPKEVLILRKKFLNLFQGKIFELACNSYGSHIVDKLWDFTVLLPMYKDRIASEMMAQANRVKDSTYGRLVWKNWSMELFVRKKYDWKVLVKEQEENYYAEEGTQGDAMKKKKPIELKMEEIFKKKQYQEERAKREGEDLAGSNQKRMKGRGRNR.

The disordered stretch occupies residues 1 to 52 (MPKPRGRRVQSAFKERVENSEATHENSIAETGSDVEISLHEDQPQTSDNKNQ). Basic and acidic residues predominate over residues 13-24 (FKERVENSEATH). Pumilio repeat units follow at residues 99 to 134 (ESRG…HIFH), 135 to 170 (QFLG…EIVN), 206 to 243 (QLEP…TMAN), 291 to 326 (LDTK…RSVW), 340 to 377 (SEEA…RLYR), 379 to 415 (YMKD…HILD), 531 to 568 (LPQE…EVLI), and 575 to 613 (NLFQ…RIAS). The span at 688-698 (YQEERAKREGE) shows a compositional bias: basic and acidic residues. The tract at residues 688-715 (YQEERAKREGEDLAGSNQKRMKGRGRNR) is disordered. The span at 706–715 (KRMKGRGRNR) shows a compositional bias: basic residues.

It belongs to the NOP9 family.

It localises to the nucleus. Its subcellular location is the nucleolus. Its function is as follows. RNA-binding nucleolar protein required for pre-rRNA processing. Involved in production of 18S rRNA and assembly of small ribosomal subunit. This chain is Nucleolar protein 9 (NOP9), found in Clavispora lusitaniae (strain ATCC 42720) (Yeast).